Reading from the N-terminus, the 490-residue chain is Phosphoglucosamine mutase (490 aa).

S139 (phosphoserine intermediate) is an active-site residue. Mg(2+)-binding residues include S139, D279, D281, and D283. S139 bears the Phosphoserine mark.

Belongs to the phosphohexose mutase family. The cofactor is Mg(2+). Activated by phosphorylation.

It carries out the reaction alpha-D-glucosamine 1-phosphate = D-glucosamine 6-phosphate. Functionally, catalyzes the conversion of glucosamine-6-phosphate to glucosamine-1-phosphate. The chain is Phosphoglucosamine mutase from Trichormus variabilis (strain ATCC 29413 / PCC 7937) (Anabaena variabilis).